The primary structure comprises 417 residues: Synaptic vesicle membrane protein VAT-1 homolog-like (417 aa).

Disordered regions lie at residues 1 to 33 (MAKEGVEKAEETEQMIEKETSKEPAEGGDGSHR) and 382 to 417 (PTPLMANDSTETSEAGEEEEDHEGDSENKERMPFIQ). A Phosphoserine modification is found at serine 390. Phosphothreonine occurs at positions 391 and 393. Residue serine 394 is modified to Phosphoserine. A compositionally biased stretch (acidic residues) spans 395–405 (EAGEEEEDHEG). Basic and acidic residues predominate over residues 406–417 (DSENKERMPFIQ).

The protein belongs to the zinc-containing alcohol dehydrogenase family. Quinone oxidoreductase subfamily.

The sequence is that of Synaptic vesicle membrane protein VAT-1 homolog-like (Vat1l) from Mus musculus (Mouse).